A 464-amino-acid chain; its full sequence is NADH-quinone oxidoreductase subunit N (464 aa).

The next 14 helical transmembrane spans lie at 6–26 (FLYI…LVLG), 36–56 (SMSL…LIYF), 75–95 (CLAR…FFFA), 101–121 (YEFA…VEAH), 123–143 (FLSF…LVCF), 157–177 (FFVL…LVYG), 197–217 (LGAT…LGAV), 231–253 (PTVA…FAGL), 257–279 (VVIP…MVVG), 293–313 (FAYA…TGVV), 317–337 (PVLF…TVLL), 360–380 (AFTF…SGFF), 395–415 (FGVP…IPCF), and 439–459 (NVGL…VVLL).

The protein belongs to the complex I subunit 2 family. NDH-1 is composed of 14 different subunits. Subunits NuoA, H, J, K, L, M, N constitute the membrane sector of the complex.

The protein resides in the cell inner membrane. It catalyses the reaction a quinone + NADH + 5 H(+)(in) = a quinol + NAD(+) + 4 H(+)(out). Its function is as follows. NDH-1 shuttles electrons from NADH, via FMN and iron-sulfur (Fe-S) centers, to quinones in the respiratory chain. The immediate electron acceptor for the enzyme in this species is believed to be ubiquinone. Couples the redox reaction to proton translocation (for every two electrons transferred, four hydrogen ions are translocated across the cytoplasmic membrane), and thus conserves the redox energy in a proton gradient. The sequence is that of NADH-quinone oxidoreductase subunit N from Anaplasma phagocytophilum (strain HZ).